We begin with the raw amino-acid sequence, 149 residues long: Large ribosomal subunit protein bL9 (149 aa).

This sequence belongs to the bacterial ribosomal protein bL9 family.

Its function is as follows. Binds to the 23S rRNA. The protein is Large ribosomal subunit protein bL9 of Geobacillus kaustophilus (strain HTA426).